Consider the following 175-residue polypeptide: Co-chaperone protein HscB homolog (175 aa).

Residues 7–79 (SHFDLFHLPA…LKRASYLLSL (73 aa)) enclose the J domain.

This sequence belongs to the HscB family. In terms of assembly, interacts with HscA and stimulates its ATPase activity.

Its function is as follows. Co-chaperone involved in the maturation of iron-sulfur cluster-containing proteins. Seems to help targeting proteins to be folded toward HscA. The polypeptide is Co-chaperone protein HscB homolog (Burkholderia cenocepacia (strain ATCC BAA-245 / DSM 16553 / LMG 16656 / NCTC 13227 / J2315 / CF5610) (Burkholderia cepacia (strain J2315))).